Here is a 238-residue protein sequence, read N- to C-terminus: 14-3-3 protein 2 (238 aa).

This sequence belongs to the 14-3-3 family.

In terms of biological role, probable adapter protein. The protein is 14-3-3 protein 2 of Entamoeba histolytica (strain ATCC 30459 / HM-1:IMSS / ABRM).